A 67-amino-acid polypeptide reads, in one-letter code: Conotoxin Lt5.9 (67 aa).

An N-terminal signal peptide occupies residues 1–19 (MLCLPVFIILLLLASPAAP). Residues 20 to 46 (KSFETKVQSDLTRTDGNMETEENLGEV) constitute a propeptide that is removed on maturation.

The protein belongs to the conotoxin T superfamily. Contains 2 disulfide bonds that can be either 'C1-C3, C2-C4' or 'C1-C4, C2-C3', since these disulfide connectivities have been observed for conotoxins with cysteine framework V (for examples, see AC P0DQQ7 and AC P81755). As to expression, expressed by the venom duct.

The protein localises to the secreted. This Conus litteratus (Lettered cone) protein is Conotoxin Lt5.9.